Consider the following 397-residue polypeptide: Probable pyruvate dehydrogenase E1 component subunit alpha, mitochondrial (397 aa).

Pyruvate is bound by residues histidine 86, tyrosine 112, arginine 113, glycine 159, valine 161, aspartate 190, glycine 191, alanine 192, and asparagine 219. Tyrosine 112, arginine 113, glycine 159, valine 161, aspartate 190, glycine 191, alanine 192, asparagine 219, and histidine 286 together coordinate thiamine diphosphate. Residue aspartate 190 participates in Mg(2+) binding. Asparagine 219 is a binding site for Mg(2+).

In terms of assembly, tetramer of 2 alpha and 2 beta subunits. The cofactor is thiamine diphosphate. Requires Mg(2+) as cofactor.

The protein resides in the mitochondrion matrix. The catalysed reaction is N(6)-[(R)-lipoyl]-L-lysyl-[protein] + pyruvate + H(+) = N(6)-[(R)-S(8)-acetyldihydrolipoyl]-L-lysyl-[protein] + CO2. With respect to regulation, E1 activity is regulated by phosphorylation (inactivation) and dephosphorylation (activation) of the alpha subunit. In terms of biological role, the pyruvate dehydrogenase complex catalyzes the overall conversion of pyruvate to acetyl-CoA and CO(2). It contains multiple copies of three enzymatic components: pyruvate dehydrogenase (E1), dihydrolipoamide acetyltransferase (E2) and lipoamide dehydrogenase (E3). The polypeptide is Probable pyruvate dehydrogenase E1 component subunit alpha, mitochondrial (Caenorhabditis elegans).